The sequence spans 153 residues: 3-hydroxyacyl-[acyl-carrier-protein] dehydratase FabZ (153 aa).

H47 is a catalytic residue.

This sequence belongs to the thioester dehydratase family. FabZ subfamily.

It localises to the cytoplasm. It carries out the reaction a (3R)-hydroxyacyl-[ACP] = a (2E)-enoyl-[ACP] + H2O. Involved in unsaturated fatty acids biosynthesis. Catalyzes the dehydration of short chain beta-hydroxyacyl-ACPs and long chain saturated and unsaturated beta-hydroxyacyl-ACPs. The chain is 3-hydroxyacyl-[acyl-carrier-protein] dehydratase FabZ from Dichelobacter nodosus (strain VCS1703A).